We begin with the raw amino-acid sequence, 531 residues long: O-phosphoserine--tRNA(Cys) ligase (531 aa).

Residues 189–191 (HMT), 234–236 (SAS), 276–277 (YY), and N319 each bind substrate.

It belongs to the class-II aminoacyl-tRNA synthetase family. O-phosphoseryl-tRNA(Cys) synthetase subfamily. Homotetramer. Interacts with SepCysS.

The catalysed reaction is tRNA(Cys) + O-phospho-L-serine + ATP = O-phospho-L-seryl-tRNA(Cys) + AMP + diphosphate. In terms of biological role, catalyzes the attachment of O-phosphoserine (Sep) to tRNA(Cys). In Methanoculleus marisnigri (strain ATCC 35101 / DSM 1498 / JR1), this protein is O-phosphoserine--tRNA(Cys) ligase.